A 189-amino-acid polypeptide reads, in one-letter code: MRLSLLLLLPLLGAWAIPGGFGDEASLTATAPELDDEEKFSTHIPTHLRCDACRAVAYQMWQHLTKAEAKLLPLDSGGRRELSESVYTDVLDQSCSQTWQGYGVGEVDQVKRLMGPGLSTGAQPSIMVMIMEGLWPTRLSKTCFHYLGEFGEDQIYEAHQQGRGTLEALLCGGPRGACSEKAPDTRTEL.

Positions Met-1–Ala-16 are cleaved as a signal peptide. Cystine bridges form between Cys-50/Cys-178, Cys-53/Cys-171, and Cys-95/Cys-143. Residues Arg-186 to Leu-189 carry the Prevents secretion from ER motif.

This sequence belongs to the MZB1 family. As to quaternary structure, part of the ER chaperone complex, a multi-protein complex in the endoplasmic reticulum containing a large number of molecular chaperones which associates with unassembled incompletely folded immunoglobulin heavy chains. Interacts with HSP90B1 and PDIA3 in a calcium-dependent manner. In terms of processing, forms an interchain disulfide bond with IgM monomers.

It is found in the endoplasmic reticulum lumen. The protein resides in the secreted. In terms of biological role, associates with immunoglobulin M (IgM) heavy and light chains and promotes IgM assembly and secretion. May exert its effect by acting as a molecular chaperone or as an oxidoreductase as it displays a low level of oxidoreductase activity. Helps to diversify peripheral B-cell functions by regulating Ca(2+) stores, antibody secretion, and integrin activation. Acts as a hormone-regulated adipokine/pro-inflammatory cytokine that is implicated in causing chronic inflammation, affecting cellular expansion and blunting insulin response in adipocytes. May have a role in the onset of insulin resistance. In Bos taurus (Bovine), this protein is Marginal zone B- and B1-cell-specific protein (MZB1).